The following is a 356-amino-acid chain: HTH-type transcriptional regulator AglR (356 aa).

In terms of domain architecture, HTH lacI-type spans 1–57 (MPVNLKQLAELLGLSQTTVSRALNGYPEVNAETRARVLEAVRETGYRPNRAAQRLAT). The H-T-H motif DNA-binding region spans 5 to 24 (LKQLAELLGLSQTTVSRALN). Residues 337-356 (TGPAPDRSPLPNPSPQVGGA) form a disordered region.

Functionally, probable regulatory protein for the binding-protein-dependent transport system for alpha-glucosides such as sucrose, maltose and trehalose. In Rhizobium meliloti (strain 1021) (Ensifer meliloti), this protein is HTH-type transcriptional regulator AglR (aglR).